Here is a 358-residue protein sequence, read N- to C-terminus: DNA polymerase IV (358 aa).

In terms of domain architecture, UmuC spans 4–185 (IIHIDMDCYF…LSLRKIPGVG (182 aa)). Aspartate 8 and aspartate 103 together coordinate Mg(2+). Glutamate 104 is an active-site residue.

The protein belongs to the DNA polymerase type-Y family. In terms of assembly, monomer. It depends on Mg(2+) as a cofactor.

It localises to the cytoplasm. The enzyme catalyses DNA(n) + a 2'-deoxyribonucleoside 5'-triphosphate = DNA(n+1) + diphosphate. Functionally, poorly processive, error-prone DNA polymerase involved in untargeted mutagenesis. Copies undamaged DNA at stalled replication forks, which arise in vivo from mismatched or misaligned primer ends. These misaligned primers can be extended by PolIV. Exhibits no 3'-5' exonuclease (proofreading) activity. May be involved in translesional synthesis, in conjunction with the beta clamp from PolIII. The polypeptide is DNA polymerase IV (Shewanella baltica (strain OS155 / ATCC BAA-1091)).